The sequence spans 416 residues: Hemagglutinin-esterase (416 aa).

The first 14 residues, 1–14 (MLSLILFFPSFAFA), serve as a signal peptide directing secretion. The segment at 4 to 121 (LILFFPSFAF…GVDSYMELKT (118 aa)) is esterase domain first part. Residues 15-393 (VTPVTPYFGP…ESVDVISSSY (379 aa)) are Virion surface-facing. Serine 37 serves as the catalytic Nucleophile. The cysteines at positions 41 and 57 are disulfide-linked. N-linked (GlcNAc...) asparagine; by host glycosylation is found at asparagine 59 and asparagine 76. 5 disulfides stabilise this stretch: cysteine 88–cysteine 136, cysteine 108–cysteine 156, cysteine 192–cysteine 273, cysteine 200–cysteine 246, and cysteine 206–cysteine 213. Residues 122-263 (SFNIKLNQMA…GTHNASIVGN (142 aa)) form a receptor binding region. 3 N-linked (GlcNAc...) asparagine; by host glycosylation sites follow: asparagine 257, asparagine 278, and asparagine 294. Positions 264–379 (FLFYPTKSYC…SCPQYVKLFD (116 aa)) are esterase domain second part. A disulfide bridge links cysteine 304 with cysteine 309. Asparagine 322 carries N-linked (GlcNAc...) asparagine; by host glycosylation. Histidine 328 acts as the Charge relay system in catalysis. An N-linked (GlcNAc...) asparagine; by host glycan is attached at asparagine 343. Cysteines 346 and 371 form a disulfide. The chain crosses the membrane as a helical span at residues 394 to 414 (FVATWVLLVVVVILIFVIISF). The Intravirion portion of the chain corresponds to 415-416 (FC).

It belongs to the influenza type C/coronaviruses hemagglutinin-esterase family. Homodimer. Post-translationally, N-glycosylated.

The protein resides in the virion membrane. It is found in the host cell membrane. It carries out the reaction N-acetyl-9-O-acetylneuraminate + H2O = N-acetylneuraminate + acetate + H(+). The enzyme catalyses N-acetyl-4-O-acetylneuraminate + H2O = N-acetylneuraminate + acetate + H(+). In terms of biological role, structural protein that makes short spikes at the surface of the virus. Contains receptor binding and receptor-destroying activities. Mediates de-O-acetylation of N-acetyl-9-O-acetylneuraminic acid, which is probably the receptor determinant recognized by the virus on the surface of erythrocytes and susceptible cells. This receptor-destroying activity is important for virus release as it probably helps preventing self-aggregation and ensures the efficient spread of the progeny virus from cell to cell. May serve as a secondary viral attachment protein for initiating infection, the spike protein being the major one. Seems to be a 'luxury' protein that is not absolutely necessary for virus infection in culture. However, its presence in the virus may alter its pathogenicity. May become a target for both the humoral and the cellular branches of the immune system. This is Hemagglutinin-esterase (HE) from Homo sapiens (Human).